The following is an 84-amino-acid chain: Perlustrin (84 aa).

An IGFBP N-terminal domain is found at 1-82 (LSCASCENAA…LDFKGVCARV (82 aa)). Disulfide bonds link C3/C28, C6/C30, C11/C31, C18/C34, C42/C55, and C49/C79.

As to expression, shell.

Its function is as follows. Binds human IGF1 and IGF2 and bovine insulin. In Haliotis laevigata (Smooth Australian abalone), this protein is Perlustrin.